The primary structure comprises 468 residues: UDP-N-acetylmuramate--L-alanine ligase (468 aa).

114 to 120 (GTHGKTT) provides a ligand contact to ATP.

This sequence belongs to the MurCDEF family.

The protein localises to the cytoplasm. It carries out the reaction UDP-N-acetyl-alpha-D-muramate + L-alanine + ATP = UDP-N-acetyl-alpha-D-muramoyl-L-alanine + ADP + phosphate + H(+). Its pathway is cell wall biogenesis; peptidoglycan biosynthesis. Its function is as follows. Cell wall formation. The polypeptide is UDP-N-acetylmuramate--L-alanine ligase (Brucella anthropi (strain ATCC 49188 / DSM 6882 / CCUG 24695 / JCM 21032 / LMG 3331 / NBRC 15819 / NCTC 12168 / Alc 37) (Ochrobactrum anthropi)).